The sequence spans 959 residues: Leucine--tRNA ligase (959 aa).

The short motif at 39–49 is the 'HIGH' region element; the sequence is PYVNAYPHLGS. The short motif at 637 to 641 is the 'KMSKS' region element; that stretch reads KMSKS. K640 contacts ATP. Residues 933-959 form a disordered region; that stretch reads TEEDGGSPRRANALPGRPALYAEKRGG.

This sequence belongs to the class-I aminoacyl-tRNA synthetase family.

It is found in the cytoplasm. It catalyses the reaction tRNA(Leu) + L-leucine + ATP = L-leucyl-tRNA(Leu) + AMP + diphosphate. The protein is Leucine--tRNA ligase of Aeropyrum pernix (strain ATCC 700893 / DSM 11879 / JCM 9820 / NBRC 100138 / K1).